The sequence spans 503 residues: Variant surface glycoprotein AnTaT 1.1 (503 aa).

The first 29 residues, 1–29 (MVTKERNAALKIVMLVASALTLHPQQALA), serve as a signal peptide directing secretion. 2 disulfides stabilise this stretch: Cys45–Cys172 and Cys154–Cys209. Asn113 carries N-linked (GlcNAc...) asparagine glycosylation. N-linked (GlcNAc...) asparagine glycans are attached at residues Asn419 and Asn432. Asp480 carries GPI-anchor amidated aspartate lipidation. A propeptide spans 481-503 (SSILLTKNFALSVVSAALVALLF) (removed in mature form).

Its subcellular location is the cell membrane. VSG forms a coat on the surface of the parasite. The trypanosome evades the immune response of the host by expressing a series of antigenically distinct VSGs from an estimated 1000 VSG genes. This Trypanosoma brucei brucei protein is Variant surface glycoprotein AnTaT 1.1.